Here is a 357-residue protein sequence, read N- to C-terminus: uncharacterized protein (357 aa).

3 helical membrane passes run 21–41 (FIKIIEFWFYLIQILTVLFSW), 86–106 (FFCLFTDTLYFMMLIITCTLF), and 135–155 (GGFVEFGSFTVLLLLKWPVIF). Disordered stretches follow at residues 184 to 229 (DKNK…AMSD) and 283 to 357 (KAGS…NKRN). Positions 195–223 (TTNTTNFSGNGSSSSTTNATSSSSSQANN) are enriched in low complexity. Composition is skewed to basic and acidic residues over residues 305-314 (KIEEYDNQKQ) and 322-337 (KETNKQQTQKDDEKET). Positions 305-337 (KIEEYDNQKQEEEENEEKETNKQQTQKDDEKET) form a coiled coil. Residues 346–357 (KKSKKGKKNKRN) are compositionally biased toward basic residues.

It is found in the membrane. This is an uncharacterized protein from Dictyostelium discoideum (Social amoeba).